A 122-amino-acid polypeptide reads, in one-letter code: Large ribosomal subunit protein bL17 (122 aa).

Belongs to the bacterial ribosomal protein bL17 family. Part of the 50S ribosomal subunit. Contacts protein L32.

The protein is Large ribosomal subunit protein bL17 of Neisseria gonorrhoeae (strain ATCC 700825 / FA 1090).